We begin with the raw amino-acid sequence, 506 residues long: Deoxyguanosinetriphosphate triphosphohydrolase (506 aa).

Residues Arg-66–Cys-274 enclose the HD domain.

This sequence belongs to the dGTPase family. Type 1 subfamily. As to quaternary structure, homotetramer. Mg(2+) serves as cofactor.

The catalysed reaction is dGTP + H2O = 2'-deoxyguanosine + triphosphate + H(+). DGTPase preferentially hydrolyzes dGTP over the other canonical NTPs. The protein is Deoxyguanosinetriphosphate triphosphohydrolase of Yersinia pestis bv. Antiqua (strain Antiqua).